A 147-amino-acid chain; its full sequence is UPF0306 protein YhbP (147 aa).

Belongs to the UPF0306 family.

This Salmonella agona (strain SL483) protein is UPF0306 protein YhbP.